The chain runs to 352 residues: Phosphoribosylformylglycinamidine cyclo-ligase (352 aa).

Belongs to the AIR synthase family.

The protein localises to the cytoplasm. The catalysed reaction is 2-formamido-N(1)-(5-O-phospho-beta-D-ribosyl)acetamidine + ATP = 5-amino-1-(5-phospho-beta-D-ribosyl)imidazole + ADP + phosphate + H(+). Its pathway is purine metabolism; IMP biosynthesis via de novo pathway; 5-amino-1-(5-phospho-D-ribosyl)imidazole from N(2)-formyl-N(1)-(5-phospho-D-ribosyl)glycinamide: step 2/2. In Pseudomonas fluorescens (strain ATCC BAA-477 / NRRL B-23932 / Pf-5), this protein is Phosphoribosylformylglycinamidine cyclo-ligase.